The sequence spans 439 residues: ATP-dependent protease ATPase subunit HslU (439 aa).

ATP-binding positions include Ile17, 59–64 (GVGKTE), Asp251, Glu317, and Arg389.

The protein belongs to the ClpX chaperone family. HslU subfamily. A double ring-shaped homohexamer of HslV is capped on each side by a ring-shaped HslU homohexamer. The assembly of the HslU/HslV complex is dependent on binding of ATP.

It localises to the cytoplasm. In terms of biological role, ATPase subunit of a proteasome-like degradation complex; this subunit has chaperone activity. The binding of ATP and its subsequent hydrolysis by HslU are essential for unfolding of protein substrates subsequently hydrolyzed by HslV. HslU recognizes the N-terminal part of its protein substrates and unfolds these before they are guided to HslV for hydrolysis. The protein is ATP-dependent protease ATPase subunit HslU of Campylobacter jejuni subsp. jejuni serotype O:23/36 (strain 81-176).